We begin with the raw amino-acid sequence, 58 residues long: Small ribosomal subunit protein eS30 (58 aa).

The tract at residues 1-58 is disordered; sequence MGKVHGSLARAGKVKNQTPKVPKLDKKKRLTGRAKKRQLYNRRFSDNGGRKKGPNSKA. Residues 25-40 are compositionally biased toward basic residues; it reads DKKKRLTGRAKKRQLY.

The protein belongs to the eukaryotic ribosomal protein eS30 family. Component of the small ribosomal subunit. Mature ribosomes consist of a small (40S) and a large (60S) subunit. The 40S subunit contains about 32 different proteins and 1 molecule of RNA (18S). The 60S subunit contains about 42 different proteins and 3 molecules of RNA (28S, 5.8S and 5S).

The protein localises to the cytoplasm. Component of the ribosome, a large ribonucleoprotein complex responsible for the synthesis of proteins in the cell. The small ribosomal subunit (SSU) binds messenger RNAs (mRNAs) and translates the encoded message by selecting cognate aminoacyl-transfer RNA (tRNA) molecules. The large subunit (LSU) contains the ribosomal catalytic site termed the peptidyl transferase center (PTC), which catalyzes the formation of peptide bonds, thereby polymerizing the amino acids delivered by tRNAs into a polypeptide chain. The nascent polypeptides leave the ribosome through a tunnel in the LSU and interact with protein factors that function in enzymatic processing, targeting, and the membrane insertion of nascent chains at the exit of the ribosomal tunnel. This Plasmodium falciparum (isolate 3D7) protein is Small ribosomal subunit protein eS30.